The sequence spans 345 residues: RDS/peripherin-like protein xRDS36 (345 aa).

At 1–24 (MVLFKAKFSFQRRVKLAQTLWLLS) the chain is on the cytoplasmic side. The helical transmembrane segment at 25 to 43 (WLSVLVGCLTFGMGIFLKV) threads the bilayer. The Lumenal segment spans residues 44–61 (QLWIHNEVMDNTTAHAVP). N-linked (GlcNAc...) asparagine glycosylation occurs at N54. The helical transmembrane segment at 62–80 (NTVITAGLVGILLGYFAGK) threads the bilayer. At 81–99 (ISQASMDLTKYQRWKSFMM) the chain is on the cytoplasmic side. The chain crosses the membrane as a helical span at residues 100–123 (PFFFLAILSCIVCLAALVLSVALR). The Lumenal segment spans residues 124-264 (GTLEESLKIG…LGYYTGIMAT (141 aa)). N-linked (GlcNAc...) asparagine glycosylation is present at N229. A helical transmembrane segment spans residues 265–290 (NGAAVTLSFLLQASVLVSLRYVQTSM). Residues 291 to 345 (DKIRDPDDVEADTEGFLLEKGVMETVNSSLEKIKDLFKSNQVETAEGGGEGAAGS) are Cytoplasmic-facing.

This sequence belongs to the PRPH2/ROM1 family. In terms of assembly, homodimer; disulfide-linked. In terms of tissue distribution, rod specific.

The protein resides in the membrane. The protein is RDS/peripherin-like protein xRDS36 (rds36) of Xenopus laevis (African clawed frog).